We begin with the raw amino-acid sequence, 86 residues long: Small ribosomal subunit protein bS20 (86 aa).

The span at 1–11 shows a compositional bias: basic residues; sequence MANHKSALKRA. Residues 1–27 form a disordered region; sequence MANHKSALKRARQNEERRIRNRARKTR.

The protein belongs to the bacterial ribosomal protein bS20 family.

Binds directly to 16S ribosomal RNA. In Syntrophobacter fumaroxidans (strain DSM 10017 / MPOB), this protein is Small ribosomal subunit protein bS20.